The chain runs to 234 residues: Small ribosomal subunit protein uS3 (234 aa).

A KH type-2 domain is found at 39–107; sequence VRKFLNKELA…PAQINIAEVK (69 aa).

This sequence belongs to the universal ribosomal protein uS3 family. Part of the 30S ribosomal subunit. Forms a tight complex with proteins S10 and S14.

Its function is as follows. Binds the lower part of the 30S subunit head. Binds mRNA in the 70S ribosome, positioning it for translation. In Haemophilus ducreyi (strain 35000HP / ATCC 700724), this protein is Small ribosomal subunit protein uS3.